A 299-amino-acid polypeptide reads, in one-letter code: UDP-3-O-acyl-N-acetylglucosamine deacetylase (299 aa).

Zn(2+) contacts are provided by His75, His232, and Asp236. His259 (proton donor) is an active-site residue.

Belongs to the LpxC family. The cofactor is Zn(2+).

It carries out the reaction a UDP-3-O-[(3R)-3-hydroxyacyl]-N-acetyl-alpha-D-glucosamine + H2O = a UDP-3-O-[(3R)-3-hydroxyacyl]-alpha-D-glucosamine + acetate. Its pathway is glycolipid biosynthesis; lipid IV(A) biosynthesis; lipid IV(A) from (3R)-3-hydroxytetradecanoyl-[acyl-carrier-protein] and UDP-N-acetyl-alpha-D-glucosamine: step 2/6. In terms of biological role, catalyzes the hydrolysis of UDP-3-O-myristoyl-N-acetylglucosamine to form UDP-3-O-myristoylglucosamine and acetate, the committed step in lipid A biosynthesis. The polypeptide is UDP-3-O-acyl-N-acetylglucosamine deacetylase (Helicobacter hepaticus (strain ATCC 51449 / 3B1)).